We begin with the raw amino-acid sequence, 339 residues long: Type IV secretion system protein PtlH homolog (339 aa).

It belongs to the GSP E family.

This Bordetella bronchiseptica (strain ATCC BAA-588 / NCTC 13252 / RB50) (Alcaligenes bronchisepticus) protein is Type IV secretion system protein PtlH homolog (ptlH).